A 239-amino-acid polypeptide reads, in one-letter code: Probable transcriptional regulatory protein BCG9842_B4761 (239 aa).

It belongs to the TACO1 family. YeeN subfamily.

Its subcellular location is the cytoplasm. The protein is Probable transcriptional regulatory protein BCG9842_B4761 of Bacillus cereus (strain G9842).